A 391-amino-acid polypeptide reads, in one-letter code: Histamine H4 receptor (391 aa).

The Extracellular portion of the chain corresponds to 1–19; it reads MSESNSTGILPPAAQVPLA. N-linked (GlcNAc...) asparagine glycosylation is present at Asn-5. A helical membrane pass occupies residues 20-40; sequence FLMSSFAFAIMVGNAVVILAF. The Cytoplasmic segment spans residues 41–52; that stretch reads VVDRNLRHRSNY. Residues 53-73 traverse the membrane as a helical segment; the sequence is FFLNLAISDFLVGLISIPLYI. At 74 to 87 the chain is on the extracellular side; the sequence is PHVLFNWNFGSGIC. A disulfide bridge connects residues Cys-87 and Cys-166. A helical transmembrane segment spans residues 88–108; that stretch reads MFWLITDYLLCTASVYNIVLI. The Cytoplasmic portion of the chain corresponds to 109–131; sequence SYDRYQSVSNAVSYRAQHTGIMK. Residues 132–152 traverse the membrane as a helical segment; that stretch reads IVAQMVAVWILAFLVNGPMIL. Over 153-174 the chain is Extracellular; that stretch reads ASDSWKNSTNTKDCEPGFVTEW. The N-linked (GlcNAc...) asparagine glycan is linked to Asn-159. A helical membrane pass occupies residues 175–195; the sequence is YILTITMLLEFLLPVISVAYF. The Cytoplasmic portion of the chain corresponds to 196–306; the sequence is NVQIYWSLWK…LLRGRKLARS (111 aa). Residues 238–258 form a disordered region; the sequence is TSNPGLKESAASRHSESPRRK. Basic and acidic residues predominate over residues 247-256; that stretch reads AASRHSESPR. Residues 307–327 traverse the membrane as a helical segment; sequence LAILLSAFAICWAPYCLFTIV. Residues 328-343 are Extracellular-facing; that stretch reads LSTYPRTERPKSVWYS. A helical transmembrane segment spans residues 344 to 364; that stretch reads IAFWLQWFNSFVNPFLYPLCH. At 365–391 the chain is on the cytoplasmic side; it reads RRFQKAFWKILCVTKQPALSQNQSVSS.

It belongs to the G-protein coupled receptor 1 family. Interacts with TSPAN4.

It is found in the cell membrane. Functionally, the H4 subclass of histamine receptors could mediate the histamine signals in peripheral tissues. Displays a significant level of constitutive activity (spontaneous activity in the absence of agonist). This is Histamine H4 receptor (Hrh4) from Mus musculus (Mouse).